The chain runs to 119 residues: MSINKNIARLRRAKSTRAHIRELGVARLSVLRTGQHLYAQVFTADGSKVIAAANTLQADVKDGLKNGKNSDAAAKVGKLIAERAKAAGIEKVAFDRSGYRYHGRIKALADAAREGGLQF.

Belongs to the universal ribosomal protein uL18 family. Part of the 50S ribosomal subunit; part of the 5S rRNA/L5/L18/L25 subcomplex. Contacts the 5S and 23S rRNAs.

In terms of biological role, this is one of the proteins that bind and probably mediate the attachment of the 5S RNA into the large ribosomal subunit, where it forms part of the central protuberance. The sequence is that of Large ribosomal subunit protein uL18 from Xanthomonas axonopodis pv. citri (strain 306).